The chain runs to 121 residues: UPF0295 protein BH0952 (121 aa).

A run of 2 helical transmembrane segments spans residues 12–32 (IRTF…IGIF) and 41–61 (VLAM…YFWI).

It belongs to the UPF0295 family.

The protein localises to the cell membrane. The sequence is that of UPF0295 protein BH0952 from Halalkalibacterium halodurans (strain ATCC BAA-125 / DSM 18197 / FERM 7344 / JCM 9153 / C-125) (Bacillus halodurans).